A 299-amino-acid polypeptide reads, in one-letter code: Bifunctional protein FolD (299 aa).

NADP(+) is bound by residues 164-166 (GRS) and I234.

Belongs to the tetrahydrofolate dehydrogenase/cyclohydrolase family. As to quaternary structure, homodimer.

It carries out the reaction (6R)-5,10-methylene-5,6,7,8-tetrahydrofolate + NADP(+) = (6R)-5,10-methenyltetrahydrofolate + NADPH. The enzyme catalyses (6R)-5,10-methenyltetrahydrofolate + H2O = (6R)-10-formyltetrahydrofolate + H(+). It participates in one-carbon metabolism; tetrahydrofolate interconversion. In terms of biological role, catalyzes the oxidation of 5,10-methylenetetrahydrofolate to 5,10-methenyltetrahydrofolate and then the hydrolysis of 5,10-methenyltetrahydrofolate to 10-formyltetrahydrofolate. The polypeptide is Bifunctional protein FolD (Christiangramia forsetii (strain DSM 17595 / CGMCC 1.15422 / KT0803) (Gramella forsetii)).